A 101-amino-acid chain; its full sequence is PAT complex subunit Asterix (101 aa).

Residues 1–26 (MADPRRPARVTRYKPPTTESNPALED) form a disordered region. Residues 1–27 (MADPRRPARVTRYKPPTTESNPALEDP) lie on the Cytoplasmic side of the membrane. A helical membrane pass occupies residues 28–46 (TPDYMNLLGMVFSMCGLML). K47 is a topological domain (lumenal). Residues 48–65 (LKWCAWIAVYCSFISFAN) traverse the membrane as a helical segment. The Cytoplasmic segment spans residues 66–69 (SRSS). A helical transmembrane segment spans residues 70–90 (EDTKQMMSSFMLSISAVVMSY). At 91–101 (LQNPQPMSPPW) the chain is on the lumenal side.

Belongs to the Asterix family. As to quaternary structure, component of the multi-pass translocon (MPT) complex.

Its subcellular location is the endoplasmic reticulum membrane. In terms of biological role, component of the multi-pass translocon (MPT) complex that mediates insertion of multi-pass membrane proteins into the lipid bilayer of membranes. The MPT complex takes over after the SEC61 complex: following membrane insertion of the first few transmembrane segments of proteins by the SEC61 complex, the MPT complex occludes the lateral gate of the SEC61 complex to promote insertion of subsequent transmembrane regions. This Gallus gallus (Chicken) protein is PAT complex subunit Asterix (WDR83OS).